We begin with the raw amino-acid sequence, 349 residues long: MRVADFTFELPDSLIARHPLAERRASRLLTLDGVSGALAHRQFTDLLEHLRPGDLMVFNNTRVIPARLFGQKASGGKLEILVERVLDSHRVLAHVRSSKSPKPGSSILIDGGGEAEMVARHDALFELKFAEEVLPLLERVGHMPLPPYIDRPDEDSDRERYQTVYSQRLGAVAAPTAGLHFDQPLLDAIAAKGVETAYVTLHVGAGTFQPVRVDNIEDHHMHSEWLEVSQDVVDAVEACKARGGRVIAVGTTSVRSLESAARDGVLKPFSGDTDIFIYPGRPFHVVDCLVTNFHLPESTLLMLVSAFAGYPETMAAYQAAIDNGYRFFSYGDAMFITRNPAPRGPEEQL.

Belongs to the QueA family. Monomer.

It localises to the cytoplasm. The enzyme catalyses 7-aminomethyl-7-carbaguanosine(34) in tRNA + S-adenosyl-L-methionine = epoxyqueuosine(34) in tRNA + adenine + L-methionine + 2 H(+). It functions in the pathway tRNA modification; tRNA-queuosine biosynthesis. In terms of biological role, transfers and isomerizes the ribose moiety from AdoMet to the 7-aminomethyl group of 7-deazaguanine (preQ1-tRNA) to give epoxyqueuosine (oQ-tRNA). The protein is S-adenosylmethionine:tRNA ribosyltransferase-isomerase of Pseudomonas fluorescens (strain SBW25).